The sequence spans 409 residues: Elongation factor Tu, chloroplastic (409 aa).

In terms of domain architecture, tr-type G spans Lys-10–Glu-214. The interval Gly-19–Thr-26 is G1. Gly-19–Thr-26 serves as a coordination point for GTP. Position 26 (Thr-26) interacts with Mg(2+). A G2 region spans residues Gly-60–Asn-64. The tract at residues Asp-81 to Gly-84 is G3. GTP contacts are provided by residues Asp-81–His-85 and Asn-136–Asp-139. Positions Asn-136 to Asp-139 are G4. The segment at Ser-174–Leu-176 is G5.

It belongs to the TRAFAC class translation factor GTPase superfamily. Classic translation factor GTPase family. EF-Tu/EF-1A subfamily.

It is found in the plastid. It localises to the chloroplast. It catalyses the reaction GTP + H2O = GDP + phosphate + H(+). Its function is as follows. GTP hydrolase that promotes the GTP-dependent binding of aminoacyl-tRNA to the A-site of ribosomes during protein biosynthesis. The sequence is that of Elongation factor Tu, chloroplastic (tufA) from Pleurastrum terricola (Filamentous green alga).